The following is an 857-amino-acid chain: Leucine--tRNA ligase (857 aa).

Residues 42–52 (PYPSGTLHMGH) carry the 'HIGH' region motif. The 'KMSKS' region motif lies at 616-620 (KMSKS). Lys619 lines the ATP pocket.

It belongs to the class-I aminoacyl-tRNA synthetase family.

It is found in the cytoplasm. The catalysed reaction is tRNA(Leu) + L-leucine + ATP = L-leucyl-tRNA(Leu) + AMP + diphosphate. The polypeptide is Leucine--tRNA ligase (Parasynechococcus marenigrum (strain WH8102)).